A 145-amino-acid chain; its full sequence is Beta sliding clamp (145 aa).

Belongs to the beta sliding clamp family. In terms of assembly, forms a ring-shaped head-to-tail homodimer around DNA which binds and tethers DNA polymerases and other proteins to the DNA. The DNA replisome complex has a single clamp-loading complex (3 tau and 1 each of delta, delta', psi and chi subunits) which binds 3 Pol III cores (1 core on the leading strand and 2 on the lagging strand) each with a beta sliding clamp dimer. Additional proteins in the replisome are other copies of gamma, psi and chi, Ssb, DNA helicase and RNA primase.

It localises to the cytoplasm. Its function is as follows. Confers DNA tethering and processivity to DNA polymerases and other proteins. Acts as a clamp, forming a ring around DNA (a reaction catalyzed by the clamp-loading complex) which diffuses in an ATP-independent manner freely and bidirectionally along dsDNA. Initially characterized for its ability to contact the catalytic subunit of DNA polymerase III (Pol III), a complex, multichain enzyme responsible for most of the replicative synthesis in bacteria; Pol III exhibits 3'-5' exonuclease proofreading activity. The beta chain is required for initiation of replication as well as for processivity of DNA replication. This chain is Beta sliding clamp (dnaN), found in Vibrio harveyi (Beneckea harveyi).